The chain runs to 257 residues: ATP synthase subunit a (257 aa).

A propeptide spans 1–4 (removed in mature form); sequence MFIT. Helical transmembrane passes span 27-47, 58-78, 93-113, 122-142, 149-169, 189-209, 214-234, and 236-256; these read FSNFGFYLGLSALIAISLAII, IVPQKFGIAMEAIYFTMLNLV, YFPFIWSLFVLILFSNLLRLI, QLIFTLGLSISILIGATILGL, VFGLFLPSGTPTPLIPLLVLI, IIAGHLTMSILGGLIFTFMGL, FIIGFLPITVLVAISLLEFGI, and FIQAYVFAILTCGFINDSLNL.

It belongs to the ATPase A chain family. F-type ATPases have 2 components, CF(1) - the catalytic core - and CF(0) - the membrane proton channel. CF(1) has five subunits: alpha(3), beta(3), gamma(1), delta(1), epsilon(1). CF(0) has three main subunits: a, b and c.

The protein resides in the mitochondrion inner membrane. Functionally, mitochondrial membrane ATP synthase (F(1)F(0) ATP synthase or Complex V) produces ATP from ADP in the presence of a proton gradient across the membrane which is generated by electron transport complexes of the respiratory chain. F-type ATPases consist of two structural domains, F(1) - containing the extramembraneous catalytic core and F(0) - containing the membrane proton channel, linked together by a central stalk and a peripheral stalk. During catalysis, ATP synthesis in the catalytic domain of F(1) is coupled via a rotary mechanism of the central stalk subunits to proton translocation. Key component of the proton channel; it may play a direct role in the translocation of protons across the membrane. The sequence is that of ATP synthase subunit a (atp6) from Schizosaccharomyces pombe (strain 972 / ATCC 24843) (Fission yeast).